A 388-amino-acid polypeptide reads, in one-letter code: Alanine racemase 1 (388 aa).

Catalysis depends on K40, which acts as the Proton acceptor; specific for D-alanine. K40 carries the N6-(pyridoxal phosphate)lysine modification. R138 is a substrate binding site. Y268 (proton acceptor; specific for L-alanine) is an active-site residue. Substrate is bound at residue M316.

This sequence belongs to the alanine racemase family. Pyridoxal 5'-phosphate is required as a cofactor.

The enzyme catalyses L-alanine = D-alanine. It functions in the pathway amino-acid biosynthesis; D-alanine biosynthesis; D-alanine from L-alanine: step 1/1. In terms of biological role, catalyzes the interconversion of L-alanine and D-alanine. May also act on other amino acids. The protein is Alanine racemase 1 (alr1) of Caldanaerobacter subterraneus subsp. tengcongensis (strain DSM 15242 / JCM 11007 / NBRC 100824 / MB4) (Thermoanaerobacter tengcongensis).